The chain runs to 149 residues: Golgi apparatus membrane protein tvp-18 (149 aa).

Asn-11 carries an N-linked (GlcNAc...) asparagine glycan. 4 helical membrane-spanning segments follow: residues Trp-18–Phe-38, Ile-41–Val-61, Asn-84–Ile-103, and Ser-108–Leu-128.

This sequence belongs to the TVP18 family.

The protein localises to the golgi apparatus membrane. Golgi membrane protein involved in vesicular trafficking. The polypeptide is Golgi apparatus membrane protein tvp-18 (tvp-18) (Neurospora crassa (strain ATCC 24698 / 74-OR23-1A / CBS 708.71 / DSM 1257 / FGSC 987)).